The chain runs to 356 residues: Geranylgeranyl pyrophosphate synthase penG (356 aa).

Positions 83, 86, and 115 each coordinate isopentenyl diphosphate. D122 and D126 together coordinate Mg(2+). R131 serves as a coordination point for dimethylallyl diphosphate. R132 provides a ligand contact to isopentenyl diphosphate. Residues K209, T210, and Q243 each contribute to the dimethylallyl diphosphate site. D246 is a binding site for Mg(2+). Dimethylallyl diphosphate contacts are provided by N250, K260, and K270.

The protein belongs to the FPP/GGPP synthase family. The cofactor is Mg(2+).

The enzyme catalyses isopentenyl diphosphate + dimethylallyl diphosphate = (2E)-geranyl diphosphate + diphosphate. The catalysed reaction is isopentenyl diphosphate + (2E)-geranyl diphosphate = (2E,6E)-farnesyl diphosphate + diphosphate. It carries out the reaction isopentenyl diphosphate + (2E,6E)-farnesyl diphosphate = (2E,6E,10E)-geranylgeranyl diphosphate + diphosphate. Its pathway is secondary metabolite biosynthesis. Functionally, geranylgeranyl pyrophosphate synthase; part of the gene cluster that mediates the biosynthesis of the indole diterpenes penitrems. The geranylgeranyl diphosphate (GGPP) synthase ptmG catalyzes the first step in penitrem biosynthesis via conversion of farnesyl pyrophosphate and isopentyl pyrophosphate into geranylgeranyl pyrophosphate (GGPP). Condensation of indole-3-glycerol phosphate with GGPP by the prenyl transferase ptmC then forms 3-geranylgeranylindole (3-GGI). Epoxidation by the FAD-dependent monooxygenase ptmM leads to a epoxidized-GGI that is substrate of the terpene cyclase ptmB for cyclization to yield paspaline. Paspaline is subsequently converted to 13-desoxypaxilline by the cytochrome P450 monooxygenase ptmP, the latter being then converted to paxilline by the cytochrome P450 monooxygenase ptmQ. Paxilline is converted to beta-paxitriol via C-10 ketoreduction by the short-chain dehydrogenase ptmH which can be monoprenylated at the C-20 by the indole diterpene prenyltransferase ptmD. A two-step elimination (acetylation and elimination) process performed by the O-acetyltransferase ptmV and ptmI leads to the production of the prenylated form of penijanthine. The FAD-linked oxidoreductase ptmO then converts the prenylated form of penijanthine into PC-M5 which is in turn transformed into PC-M4 by the aromatic dimethylallyltransferase ptmE. Five sequential oxidative transformations performed by the cytochrome P450 monooxygenases ptmK, ptmU, ptmL, ptmN and ptmJ yield the various penitrem compounds. PtmK, ptmU and ptmM are involved in the formation of the key bicyclic ring of penitrem C via the formation of the intermediates secopenitrem D and penitrem D. PtmL catalyzes the epoxidation of penitrem D and C to yield penitrem B and F, respectively. PtmJ catalyzes the last benzylic hydroxylation to convert penitrem B to prenitrem E and penitrem F to penitrem A. This Penicillium ochrochloron protein is Geranylgeranyl pyrophosphate synthase penG.